A 238-amino-acid polypeptide reads, in one-letter code: Doublecortin domain-containing protein (238 aa).

Residues 82-112 (VFERLNDKQFYTGVQKTKFMELLKNNKNKSS) are partial p25alpha domain. One can recognise a Doublecortin domain in the interval 151-232 (KTIFLFNNEK…GDPPAPIRNL (82 aa)).

In terms of assembly, interacts with alpha-tubulin 1 and beta-tubulin; the interaction stabilizes microtubule assembly.

It localises to the cytoplasm. The protein localises to the cytoskeleton. Its function is as follows. Involved in the stabilization of microtubules. Probably by controlling microtubules stabilization, plays a role in invasion, microneme secretion and parasite growth in host erythrocytes. The sequence is that of Doublecortin domain-containing protein from Plasmodium falciparum (isolate 3D7).